The sequence spans 139 residues: Actin-depolymerizing factor 1 (139 aa).

One can recognise an ADF-H domain in the interval 5-139; it reads SSGLAVNDEC…SLDIVRSRTN (135 aa).

Belongs to the actin-binding proteins ADF family. Expressed in pollen.

Its function is as follows. Actin-depolymerizing protein. Severs actin filaments (F-actin) and binds to actin monomers. This is Actin-depolymerizing factor 1 (ADF1) from Zea mays (Maize).